The primary structure comprises 1342 residues: DNA-directed RNA polymerase subunit beta (1342 aa).

This sequence belongs to the RNA polymerase beta chain family. In terms of assembly, the RNAP catalytic core consists of 2 alpha, 1 beta, 1 beta' and 1 omega subunit. When a sigma factor is associated with the core the holoenzyme is formed, which can initiate transcription.

It catalyses the reaction RNA(n) + a ribonucleoside 5'-triphosphate = RNA(n+1) + diphosphate. DNA-dependent RNA polymerase catalyzes the transcription of DNA into RNA using the four ribonucleoside triphosphates as substrates. This chain is DNA-directed RNA polymerase subunit beta, found in Buchnera aphidicola subsp. Acyrthosiphon pisum (strain Tuc7).